Reading from the N-terminus, the 90-residue chain is Sec-independent protein translocase protein TatA (90 aa).

A helical membrane pass occupies residues 1–21; it reads MGISPWTLLIVLLIVLLVFGT. Composition is skewed to basic and acidic residues over residues 42–59 and 70–90; these read MKEG…EPSK and SGEG…RHSS. The segment at 42–90 is disordered; it reads MKEGEEGAKEGEKSEPSKLEQPPEEEKESGEGHTIEGERSEQPRDRHSS.

This sequence belongs to the TatA/E family. As to quaternary structure, the Tat system comprises two distinct complexes: a TatABC complex, containing multiple copies of TatA, TatB and TatC subunits, and a separate TatA complex, containing only TatA subunits. Substrates initially bind to the TatABC complex, which probably triggers association of the separate TatA complex to form the active translocon.

Its subcellular location is the cell inner membrane. In terms of biological role, part of the twin-arginine translocation (Tat) system that transports large folded proteins containing a characteristic twin-arginine motif in their signal peptide across membranes. TatA could form the protein-conducting channel of the Tat system. The sequence is that of Sec-independent protein translocase protein TatA from Alkalilimnicola ehrlichii (strain ATCC BAA-1101 / DSM 17681 / MLHE-1).